The chain runs to 322 residues: Phosphatidylserine decarboxylase proenzyme (322 aa).

Active-site charge relay system; for autoendoproteolytic cleavage activity residues include Asp90, His147, and Ser254. The active-site Schiff-base intermediate with substrate; via pyruvic acid; for decarboxylase activity is the Ser254. Residue Ser254 is modified to Pyruvic acid (Ser); by autocatalysis. The tract at residues 292-322 (TPDAEPSPLPAEEIEAEHDASPLVDDKKDQV) is disordered. Positions 308–322 (EHDASPLVDDKKDQV) are enriched in basic and acidic residues.

It belongs to the phosphatidylserine decarboxylase family. PSD-B subfamily. Prokaryotic type I sub-subfamily. In terms of assembly, heterodimer of a large membrane-associated beta subunit and a small pyruvoyl-containing alpha subunit. The cofactor is pyruvate. In terms of processing, is synthesized initially as an inactive proenzyme. Formation of the active enzyme involves a self-maturation process in which the active site pyruvoyl group is generated from an internal serine residue via an autocatalytic post-translational modification. Two non-identical subunits are generated from the proenzyme in this reaction, and the pyruvate is formed at the N-terminus of the alpha chain, which is derived from the carboxyl end of the proenzyme. The autoendoproteolytic cleavage occurs by a canonical serine protease mechanism, in which the side chain hydroxyl group of the serine supplies its oxygen atom to form the C-terminus of the beta chain, while the remainder of the serine residue undergoes an oxidative deamination to produce ammonia and the pyruvoyl prosthetic group on the alpha chain. During this reaction, the Ser that is part of the protease active site of the proenzyme becomes the pyruvoyl prosthetic group, which constitutes an essential element of the active site of the mature decarboxylase.

It is found in the cell membrane. The catalysed reaction is a 1,2-diacyl-sn-glycero-3-phospho-L-serine + H(+) = a 1,2-diacyl-sn-glycero-3-phosphoethanolamine + CO2. Its pathway is phospholipid metabolism; phosphatidylethanolamine biosynthesis; phosphatidylethanolamine from CDP-diacylglycerol: step 2/2. Its function is as follows. Catalyzes the formation of phosphatidylethanolamine (PtdEtn) from phosphatidylserine (PtdSer). This Escherichia coli O7:K1 (strain IAI39 / ExPEC) protein is Phosphatidylserine decarboxylase proenzyme.